The chain runs to 347 residues: Microtubule-associated protein Jupiter (347 aa).

A compositionally biased stretch (polar residues) spans 1 to 14 (MISNFDCTDNQASS). Positions 1 to 33 (MISNFDCTDNQASSKVLRPPGGGSSDIFGSEMP) are disordered. Phosphoserine is present on serine 24. Phosphothreonine occurs at positions 35 and 96. Residues serine 105, serine 134, and serine 145 each carry the phosphoserine modification. 2 disordered regions span residues 127–193 (HYNG…PTPP) and 303–347 (GNPV…SGLW). Residues 132 to 145 (SGSVSSASSSVSSS) are compositionally biased toward low complexity. Positions 146–164 (TENLKMNSGSRSVFRNMST) are enriched in polar residues. The segment covering 181–193 (PPSPVPIEVPTPP) has biased composition (pro residues).

The protein belongs to the MAP Jupiter family.

The protein resides in the nucleus. Its subcellular location is the cytoplasm. It localises to the cytoskeleton. It is found in the spindle. In terms of biological role, binds to all microtubule populations. In Drosophila yakuba (Fruit fly), this protein is Microtubule-associated protein Jupiter.